Consider the following 244-residue polypeptide: tRNA (guanine-N(1)-)-methyltransferase (244 aa).

S-adenosyl-L-methionine contacts are provided by residues Gly114 and 134–139; that span reads IGDYVL. The tract at residues 220 to 244 is disordered; that stretch reads RRPDLLEKAGASPGKSGSNFGKHDA.

It belongs to the RNA methyltransferase TrmD family. As to quaternary structure, homodimer.

The protein resides in the cytoplasm. It catalyses the reaction guanosine(37) in tRNA + S-adenosyl-L-methionine = N(1)-methylguanosine(37) in tRNA + S-adenosyl-L-homocysteine + H(+). In terms of biological role, specifically methylates guanosine-37 in various tRNAs. The chain is tRNA (guanine-N(1)-)-methyltransferase from Rhizobium johnstonii (strain DSM 114642 / LMG 32736 / 3841) (Rhizobium leguminosarum bv. viciae).